A 463-amino-acid chain; its full sequence is MADGEEPEKKRRRIEELLAEKMAVDGGCGDTGDWEGRWNHVKKFLERSGPFTHPDFEPSTESLQFLLDTCKVLVIGAGGLGCELLKNLALSGFRQIHVIDMDTIDVSNLNRQFLFRPKDIGRPKAEVAAEFLNDRVPNCNVVPHFNKIQDFNDTFYRQFHIIVCGLDSIIARRWINGMLISLLNYEDGVLDPSSIVPLIDGGTEGFKGNARVILPGMTACIECTLELYPPQVNFPMCTIASMPRLPEHCIEYVRMLQWPKEQPFGEGVPLDGDDPEHIQWIFQKSLERASQYNIRGVTYRLTQGVVKRIIPAVASTNAVIAAVCATEVFKIATSAYIPLNNYLVFNDVDGLYTYTFEAERKENCPACSQLPQNIQFSPSAKLQEVLDYLTNSASLQMKSPAITATLEGKNRTLYLQSVTSIEERTRPNLSKTLKELGLVDGQELAVADVTTPQTVLFKLHFTS.

At alanine 2 the chain carries N-acetylalanine. Residues 53 to 70 (HPDFEPSTESLQFLLDTC) form an interaction with UBE2M N-terminus region. Residues 100–124 (DMDT…GRPK) and 148–171 (IQDF…SIIA) each bind ATP. 2 interaction with UBE2M N-terminus regions span residues 157 to 161 (RQFHI) and 192 to 217 (PSSI…LPGM). The tract at residues 227–229 (LYP) is interaction with NEDD8. Cysteine 237 (glycyl thioester intermediate) is an active-site residue. Interaction with NAE1 stretches follow at residues 242 to 248 (MPRLPEH) and 292 to 295 (YNIR). An interaction with UBE2M N-terminus region spans residues 331–338 (IATSAYIP). The interaction with NEDD8 stretch occupies residues 352–357 (YTYTFE). Residues 368-463 (SQLPQNIQFS…TVLFKLHFTS (96 aa)) are interaction with UBE2M core domain.

Belongs to the ubiquitin-activating E1 family. UBA3 subfamily. In terms of assembly, heterodimer of UBA3 and NAE1. Interacts with NEDD8, UBE2F and UBE2M. Binds ESR1 and ESR2 with bound steroid ligand. Interacts with TBATA. As to expression, ubiquitously expressed.

The enzyme catalyses ATP + [NEDD8 protein] + [E1 NEDD8-activating enzyme]-L-cysteine = AMP + diphosphate + [E1 NEDD8-activating enzyme]-S-[NEDD8 protein]-yl-L-cysteine.. It participates in protein modification; protein neddylation. Binding of TP53BP2 to the regulatory subunit NAE1 decreases activity. Catalytic subunit of the dimeric UBA3-NAE1 E1 enzyme. E1 activates NEDD8 by first adenylating its C-terminal glycine residue with ATP, thereafter linking this residue to the side chain of the catalytic cysteine, yielding a NEDD8-UBA3 thioester and free AMP. E1 finally transfers NEDD8 to the catalytic cysteine of UBE2M. Down-regulates steroid receptor activity. Necessary for cell cycle progression. This Homo sapiens (Human) protein is NEDD8-activating enzyme E1 catalytic subunit (UBA3).